A 250-amino-acid chain; its full sequence is uncharacterized protein (250 aa).

7 consecutive transmembrane segments (helical) span residues 36–56 (VALG…VPAV), 73–93 (PLYM…GFAM), 101–121 (AGAL…SVML), 128–148 (VAAT…FGYT), 156–176 (FGSF…VSIF), 180–200 (PALL…LIAY), and 225–245 (FGAL…LSFF).

The protein belongs to the BI1 family.

The protein resides in the cell membrane. This is an uncharacterized protein from Caulobacter vibrioides (strain ATCC 19089 / CIP 103742 / CB 15) (Caulobacter crescentus).